A 204-amino-acid polypeptide reads, in one-letter code: MSSILLLTSSPRAESLSTPIAVELAEKLKNQNPGSFLVRRDLAASPLPHIDDLFTGAIRKPAEARTAEEVAAVKTSDELVNELFAADTIVISTGLINFNIYSSLKTWIDNVARAGLTFKYTESGPVGLLTGKKVYVVLTSGGVYSQGPAAPLNHAVPYLKSVFGFLGITDIETIYVEGLAFGPEAAEKAIDAAKMRVQEIALAA.

Residues Ser-10, 15–17, and 139–142 contribute to the FMN site; these read SLS and TSGG.

This sequence belongs to the azoreductase type 1 family. As to quaternary structure, homodimer. It depends on FMN as a cofactor.

It catalyses the reaction 2 a quinone + NADH + H(+) = 2 a 1,4-benzosemiquinone + NAD(+). It carries out the reaction N,N-dimethyl-1,4-phenylenediamine + anthranilate + 2 NAD(+) = 2-(4-dimethylaminophenyl)diazenylbenzoate + 2 NADH + 2 H(+). In terms of biological role, quinone reductase that provides resistance to thiol-specific stress caused by electrophilic quinones. Its function is as follows. Also exhibits azoreductase activity. Catalyzes the reductive cleavage of the azo bond in aromatic azo compounds to the corresponding amines. In Rhizobium leguminosarum bv. trifolii (strain WSM2304), this protein is FMN-dependent NADH:quinone oxidoreductase.